The primary structure comprises 310 residues: Adenylyl-sulfate kinase 4, chloroplastic (310 aa).

The N-terminal 75 residues, 1 to 75 (MDVAAMARCV…MAKDESISSR (75 aa)), are a transit peptide targeting the chloroplast. Position 116 to 124 (116 to 124 (GLSGSGKSS)) interacts with ATP. Residues Asp146, Arg149, Arg163, Asn166, 189-190 (IS), and Gly239 each bind substrate. Ser190 (phosphoserine intermediate) is an active-site residue.

Belongs to the APS kinase family. In terms of assembly, homodimer; disulfide-linked. Expressed in root vasculature, root tips, leaf epidermal and guard cells, pollen grains and radicle of immature seeds.

It localises to the plastid. It is found in the chloroplast. It catalyses the reaction adenosine 5'-phosphosulfate + ATP = 3'-phosphoadenylyl sulfate + ADP + H(+). Its pathway is sulfur metabolism; hydrogen sulfide biosynthesis; sulfite from sulfate: step 2/3. Its function is as follows. Catalyzes the phosphorylation of adenosine 5'-phosphosulfate to 3'-phosphoadenylyl sulfate, which is the activated sulfate form for sulfation reactions. Essential for plant reproduction and viability. The chain is Adenylyl-sulfate kinase 4, chloroplastic (APK4) from Arabidopsis thaliana (Mouse-ear cress).